The following is a 153-amino-acid chain: Endoribonuclease YbeY (153 aa).

The Zn(2+) site is built by H118, H122, and H128.

It belongs to the endoribonuclease YbeY family. Requires Zn(2+) as cofactor.

The protein resides in the cytoplasm. Its function is as follows. Single strand-specific metallo-endoribonuclease involved in late-stage 70S ribosome quality control and in maturation of the 3' terminus of the 16S rRNA. This Pelagibacter ubique (strain HTCC1062) protein is Endoribonuclease YbeY.